We begin with the raw amino-acid sequence, 307 residues long: Small ribosomal subunit protein uS5m (307 aa).

The transit peptide at 1–13 directs the protein to the mitochondrion; that stretch reads MFKRQLSTSVRYL. The region spanning 144-208 is the S5 DRBM domain; it reads LTMKPLVMKR…WDAVRNLKEI (65 aa).

This sequence belongs to the universal ribosomal protein uS5 family. Component of the mitochondrial small ribosomal subunit (mt-SSU). Mature yeast 74S mitochondrial ribosomes consist of a small (37S) and a large (54S) subunit. The 37S small subunit contains a 15S ribosomal RNA (15S mt-rRNA) and 34 different proteins. The 54S large subunit contains a 21S rRNA (21S mt-rRNA) and 46 different proteins. uS3m, uS4m and uS5m form the narrow entry site of the mRNA channel.

The protein localises to the mitochondrion. Functionally, component of the mitochondrial ribosome (mitoribosome), a dedicated translation machinery responsible for the synthesis of mitochondrial genome-encoded proteins, including at least some of the essential transmembrane subunits of the mitochondrial respiratory chain. The mitoribosomes are attached to the mitochondrial inner membrane and translation products are cotranslationally integrated into the membrane. The polypeptide is Small ribosomal subunit protein uS5m (MRPS5) (Saccharomyces cerevisiae (strain ATCC 204508 / S288c) (Baker's yeast)).